The following is a 498-amino-acid chain: MRNGTIRYPGSDAAPGPDEMSAILRRCGIRLAPARIGQLWTYHQLLREFNPELNLTRIHNFANMVLKLYVDSLLPMNLVELPSPLMDLGTGPGMPGIPIKIAMPELEIVLAESRQKRAAFLKMAVERLKLEKVEVVGKSVGSSFEVPVKGVITRAVESVGATLERIAGCLDRDGLAIFMKGPQCDAEIGEALKRFRGEYRLWRDIHYTIPHTRNERRLVVFQRLGPPTRIRKETAMKRHGFRKIESENNDLYRDIRKLLTSRGIRKQQRALVSGSKQVHETLRDFPDDCLAWIAPGQEMPPPEGAPGHMSWYQMAPALFETLDVFGTRTPLLLIKVGEIETWDPVEGFPAGCSVLVPFQDPENVGAVIRSAAAFGAVQVILLRESAHPFHPKALRASGGAVLRMKLRNGPPLENLPENLPILPLSAEGRDITRHVFPAAFGLLPGLEGPGLPDNWRRKSFAIPICKDVESLNAATAAAIALYAWSRSGSQTKHSPAPA.

The methyltransferase G stretch occupies residues 1 to 230; it reads MRNGTIRYPG…FQRLGPPTRI (230 aa). The S-adenosyl-L-methionine site is built by Gly-89, Met-94, and Arg-154. The segment at 231–498 is methyltransferase TrmH family; that stretch reads RKETAMKRHG…SQTKHSPAPA (268 aa).

The protein in the N-terminal section; belongs to the methyltransferase superfamily. RNA methyltransferase RsmG family. In the C-terminal section; belongs to the class IV-like SAM-binding methyltransferase superfamily. RNA methyltransferase TrmH family.

The protein resides in the cytoplasm. It carries out the reaction guanosine(527) in 16S rRNA + S-adenosyl-L-methionine = N(7)-methylguanosine(527) in 16S rRNA + S-adenosyl-L-homocysteine. Its function is as follows. Specifically methylates the N7 position of guanine in position 527 of 16S rRNA. The protein is Ribosomal RNA small subunit methyltransferase G 2 (rsmG2) of Syntrophobacter fumaroxidans (strain DSM 10017 / MPOB).